The sequence spans 247 residues: Ubiquinone biosynthesis O-methyltransferase (247 aa).

S-adenosyl-L-methionine contacts are provided by arginine 39, glycine 70, aspartate 91, and methionine 134.

Belongs to the methyltransferase superfamily. UbiG/COQ3 family.

It carries out the reaction a 3-demethylubiquinol + S-adenosyl-L-methionine = a ubiquinol + S-adenosyl-L-homocysteine + H(+). It catalyses the reaction a 3-(all-trans-polyprenyl)benzene-1,2-diol + S-adenosyl-L-methionine = a 2-methoxy-6-(all-trans-polyprenyl)phenol + S-adenosyl-L-homocysteine + H(+). The protein operates within cofactor biosynthesis; ubiquinone biosynthesis. O-methyltransferase that catalyzes the 2 O-methylation steps in the ubiquinone biosynthetic pathway. In Cereibacter sphaeroides (strain ATCC 17029 / ATH 2.4.9) (Rhodobacter sphaeroides), this protein is Ubiquinone biosynthesis O-methyltransferase.